A 100-amino-acid chain; its full sequence is MYAIVKTGGKQYKVAEGDLVKVEKIEGEPGSAVALTPVLVVDGADLTSGDKLENVAVNAEIVEHVRGPKIRGMHYKNKTGYKRRWGHRQALTVLKITGIK.

This sequence belongs to the bacterial ribosomal protein bL21 family. Part of the 50S ribosomal subunit. Contacts protein L20.

In terms of biological role, this protein binds to 23S rRNA in the presence of protein L20. In Corynebacterium urealyticum (strain ATCC 43042 / DSM 7109), this protein is Large ribosomal subunit protein bL21.